The sequence spans 248 residues: ATP synthase subunit a, chloroplastic (248 aa).

5 helical membrane-spanning segments follow: residues 38–58, 96–116, 135–155, 200–220, and 221–241; these read QVLL…VLTV, VPFI…GALV, INTT…AGLA, LVVA…VMLL, and GLFT…AYIG.

The protein belongs to the ATPase A chain family. F-type ATPases have 2 components, CF(1) - the catalytic core - and CF(0) - the membrane proton channel. CF(1) has five subunits: alpha(3), beta(3), gamma(1), delta(1), epsilon(1). CF(0) has four main subunits: a, b, b' and c.

Its subcellular location is the plastid. The protein localises to the chloroplast thylakoid membrane. Functionally, key component of the proton channel; it plays a direct role in the translocation of protons across the membrane. This chain is ATP synthase subunit a, chloroplastic, found in Welwitschia mirabilis (Tree tumbo).